A 276-amino-acid chain; its full sequence is Bifunctional protein FolD (276 aa).

NADP(+)-binding positions include 157–159 (NRS), Ser-182, and Ile-223.

This sequence belongs to the tetrahydrofolate dehydrogenase/cyclohydrolase family. Homodimer.

It catalyses the reaction (6R)-5,10-methylene-5,6,7,8-tetrahydrofolate + NADP(+) = (6R)-5,10-methenyltetrahydrofolate + NADPH. The catalysed reaction is (6R)-5,10-methenyltetrahydrofolate + H2O = (6R)-10-formyltetrahydrofolate + H(+). The protein operates within one-carbon metabolism; tetrahydrofolate interconversion. In terms of biological role, catalyzes the oxidation of 5,10-methylenetetrahydrofolate to 5,10-methenyltetrahydrofolate and then the hydrolysis of 5,10-methenyltetrahydrofolate to 10-formyltetrahydrofolate. This is Bifunctional protein FolD from Thermoplasma acidophilum (strain ATCC 25905 / DSM 1728 / JCM 9062 / NBRC 15155 / AMRC-C165).